Reading from the N-terminus, the 346-residue chain is Senescence-specific cysteine protease SAG12 (346 aa).

An N-terminal signal peptide occupies residues 1–25; the sequence is MALKHMQIFLFVAIFSSFCFSITLS. Residue N124 is glycosylated (N-linked (GlcNAc...) asparagine). Intrachain disulfides connect C151/C192, C185/C225, and C283/C335. The active site involves C154. H289 is an active-site residue. Residue N301 is glycosylated (N-linked (GlcNAc...) asparagine). Residue N310 is part of the active site.

It belongs to the peptidase C1 family. As to expression, found in senescent leaves, especially in senescence-associated vacuoles- (SAVs) containing cells (e.g. mesophyll and guard cells), and in senescencing ovules of unfertilised pistils.

It localises to the vacuole. Its function is as follows. Cysteine protease that may have a developmental senescence specific cell death function during apoptosis, heavy metal detoxification, and hypersensitive response. The protein is Senescence-specific cysteine protease SAG12 of Arabidopsis thaliana (Mouse-ear cress).